A 168-amino-acid chain; its full sequence is Phosphopantetheine adenylyltransferase (168 aa).

Threonine 9 is a substrate binding site. Residues 9 to 10 and histidine 17 each bind ATP; that span reads TF. The substrate site is built by lysine 41, leucine 74, and arginine 88. Residues 89-91, glutamate 99, and 124-130 contribute to the ATP site; these read GLR and LQPIASR.

It belongs to the bacterial CoaD family. In terms of assembly, homohexamer. Requires Mg(2+) as cofactor.

It is found in the cytoplasm. The enzyme catalyses (R)-4'-phosphopantetheine + ATP + H(+) = 3'-dephospho-CoA + diphosphate. Its pathway is cofactor biosynthesis; coenzyme A biosynthesis; CoA from (R)-pantothenate: step 4/5. Reversibly transfers an adenylyl group from ATP to 4'-phosphopantetheine, yielding dephospho-CoA (dPCoA) and pyrophosphate. The sequence is that of Phosphopantetheine adenylyltransferase from Sphingopyxis alaskensis (strain DSM 13593 / LMG 18877 / RB2256) (Sphingomonas alaskensis).